The chain runs to 122 residues: Large ribosomal subunit protein uL14 (122 aa).

It belongs to the universal ribosomal protein uL14 family. As to quaternary structure, part of the 50S ribosomal subunit. Forms a cluster with proteins L3 and L19. In the 70S ribosome, L14 and L19 interact and together make contacts with the 16S rRNA in bridges B5 and B8.

Functionally, binds to 23S rRNA. Forms part of two intersubunit bridges in the 70S ribosome. This Delftia acidovorans (strain DSM 14801 / SPH-1) protein is Large ribosomal subunit protein uL14.